The sequence spans 131 residues: MSWQAYVDEHLMCEIDGHHLTAAAILGHDGSVWAQSSSFPQFKSEEITNIMNDFNEPGSLAPTGLYLGSTKYMVIQGEPGAVIRGKKGSGGVTVKKTNQALIFGIYEEPMTPGQCNMVVERLGDYLIEQGM.

Residues Cys-13 and Cys-115 are joined by a disulfide bond. The Involved in PIP2 interaction motif lies at 81 to 97 (AVIRGKKGSGGVTVKKT). Thr-111 bears the Phosphothreonine mark.

This sequence belongs to the profilin family. Occurs in many kinds of cells as a complex with monomeric actin in a 1:1 ratio.

It localises to the cytoplasm. It is found in the cytoskeleton. Functionally, binds to actin and affects the structure of the cytoskeleton. At high concentrations, profilin prevents the polymerization of actin, whereas it enhances it at low concentrations. The polypeptide is Profilin (Phoenix dactylifera (Date palm)).